Reading from the N-terminus, the 225-residue chain is uncharacterized protein (225 aa).

An N-terminal signal peptide occupies residues 1–22 (MLQHYSVSWKKGLAALCLLAVA). Residues 161–190 (GNLTAAEEKKTGCLVCLDSCPVGIVSNATY) form the 4Fe-4S ferredoxin-type domain.

This is an uncharacterized protein from Escherichia coli (strain K12).